A 400-amino-acid polypeptide reads, in one-letter code: Tryptophan synthase beta chain (400 aa).

An N6-(pyridoxal phosphate)lysine modification is found at Lys-92.

Belongs to the TrpB family. In terms of assembly, tetramer of two alpha and two beta chains. Pyridoxal 5'-phosphate is required as a cofactor.

It carries out the reaction (1S,2R)-1-C-(indol-3-yl)glycerol 3-phosphate + L-serine = D-glyceraldehyde 3-phosphate + L-tryptophan + H2O. The protein operates within amino-acid biosynthesis; L-tryptophan biosynthesis; L-tryptophan from chorismate: step 5/5. Functionally, the beta subunit is responsible for the synthesis of L-tryptophan from indole and L-serine. In Neisseria meningitidis serogroup A / serotype 4A (strain DSM 15465 / Z2491), this protein is Tryptophan synthase beta chain.